The sequence spans 133 residues: Small ribosomal subunit protein bS6 (133 aa).

Over residues 106-125 (REERVERAPRAPRPEVKAEP) the composition is skewed to basic and acidic residues. The interval 106–133 (REERVERAPRAPRPEVKAEPEAEATAEA) is disordered.

Belongs to the bacterial ribosomal protein bS6 family.

Functionally, binds together with bS18 to 16S ribosomal RNA. This Psychromonas ingrahamii (strain DSM 17664 / CCUG 51855 / 37) protein is Small ribosomal subunit protein bS6.